Consider the following 330-residue polypeptide: MKIMILGIDIGGANTKITEIEGDNYKIHHIYFPMWKKKDELEDLLKNYNDNVDYVALVMTAELADCYKTKKEGVEDIIDKVEKAFNCPVYVFDVNGNFLTSEEAKKNYLDVSASNWNATAKFVAEFIKDSCILVDMGSTTTDIIPIKDKEVLAEKTDLDRLMNNQLVYVGTLRTPVSFLANKIEFRGKLTNLSSEYFAITADISLILNKITEEDYTCDTPDGAGKDFESCLTRLVRVLCADREMVKDDELIDFANKLYNKLLELIRENVDTIAKRYNLNDVVITGLGEEILKDALDEYNIISIKETYGKDVSLATPSFAVAKLLQKQLDK.

It belongs to the MfnF family.

The catalysed reaction is gamma-L-glutamyltyramine + [5-(aminomethyl)furan-3-yl]methyl diphosphate = (4-{4-[2-(gamma-L-glutamylamino)ethyl]phenoxymethyl}furan-2-yl)methanamine + diphosphate. Its pathway is cofactor biosynthesis; methanofuran biosynthesis. Its function is as follows. Catalyzes the condensation between 5-(aminomethyl)-3-furanmethanol diphosphate (F1-PP) and gamma-glutamyltyramine to produce APMF-Glu. The sequence is that of (4-{4-[2-(gamma-L-glutamylamino)ethyl]phenoxymethyl}furan-2-yl)methanamine synthase from Methanocaldococcus jannaschii (strain ATCC 43067 / DSM 2661 / JAL-1 / JCM 10045 / NBRC 100440) (Methanococcus jannaschii).